Consider the following 427-residue polypeptide: Serine--tRNA ligase (427 aa).

Residue 229–231 (TAE) coordinates L-serine. An ATP-binding site is contributed by 260–262 (RSE). Position 283 (Glu-283) interacts with L-serine. An ATP-binding site is contributed by 347-350 (EISS). Ser-383 lines the L-serine pocket.

This sequence belongs to the class-II aminoacyl-tRNA synthetase family. Type-1 seryl-tRNA synthetase subfamily. Homodimer. The tRNA molecule binds across the dimer.

It is found in the cytoplasm. The catalysed reaction is tRNA(Ser) + L-serine + ATP = L-seryl-tRNA(Ser) + AMP + diphosphate + H(+). The enzyme catalyses tRNA(Sec) + L-serine + ATP = L-seryl-tRNA(Sec) + AMP + diphosphate + H(+). Its pathway is aminoacyl-tRNA biosynthesis; selenocysteinyl-tRNA(Sec) biosynthesis; L-seryl-tRNA(Sec) from L-serine and tRNA(Sec): step 1/1. Functionally, catalyzes the attachment of serine to tRNA(Ser). Is also able to aminoacylate tRNA(Sec) with serine, to form the misacylated tRNA L-seryl-tRNA(Sec), which will be further converted into selenocysteinyl-tRNA(Sec). In Nitrosococcus oceani (strain ATCC 19707 / BCRC 17464 / JCM 30415 / NCIMB 11848 / C-107), this protein is Serine--tRNA ligase.